A 425-amino-acid polypeptide reads, in one-letter code: Dihydroorotase (425 aa).

Positions 56 and 58 each coordinate Zn(2+). Residues 58-60 (HYR) and Asn90 each bind substrate. Residues Asp148, His175, and His228 each contribute to the Zn(2+) site. Residue Asn274 coordinates substrate. Position 301 (Asp301) interacts with Zn(2+). The active site involves Asp301. Residues His305 and 319–320 (FG) each bind substrate.

The protein belongs to the metallo-dependent hydrolases superfamily. DHOase family. Class I DHOase subfamily. Zn(2+) is required as a cofactor.

It catalyses the reaction (S)-dihydroorotate + H2O = N-carbamoyl-L-aspartate + H(+). Its pathway is pyrimidine metabolism; UMP biosynthesis via de novo pathway; (S)-dihydroorotate from bicarbonate: step 3/3. Catalyzes the reversible cyclization of carbamoyl aspartate to dihydroorotate. The sequence is that of Dihydroorotase from Lactobacillus helveticus (strain DPC 4571).